The primary structure comprises 90 residues: Small ribosomal subunit protein bS18 (90 aa).

Belongs to the bacterial ribosomal protein bS18 family. Part of the 30S ribosomal subunit. Forms a tight heterodimer with protein bS6.

In terms of biological role, binds as a heterodimer with protein bS6 to the central domain of the 16S rRNA, where it helps stabilize the platform of the 30S subunit. The chain is Small ribosomal subunit protein bS18 from Porphyromonas gingivalis (strain ATCC 33277 / DSM 20709 / CIP 103683 / JCM 12257 / NCTC 11834 / 2561).